Reading from the N-terminus, the 92-residue chain is Small ribosomal subunit protein uS19 (92 aa).

The interval 72-92 is disordered; the sequence is GEFSPTRTYTGHGSDKKSKRG.

The protein belongs to the universal ribosomal protein uS19 family.

In terms of biological role, protein S19 forms a complex with S13 that binds strongly to the 16S ribosomal RNA. This is Small ribosomal subunit protein uS19 from Gluconobacter oxydans (strain 621H) (Gluconobacter suboxydans).